A 560-amino-acid chain; its full sequence is Dihydroxy-acid dehydratase (560 aa).

Mg(2+) is bound at residue Asp78. Residue Cys119 participates in [2Fe-2S] cluster binding. Mg(2+)-binding residues include Asp120 and Lys121. Residue Lys121 is modified to N6-carboxylysine. Cys192 provides a ligand contact to [2Fe-2S] cluster. Mg(2+) is bound at residue Glu446. The Proton acceptor role is filled by Ser472.

Belongs to the IlvD/Edd family. In terms of assembly, homodimer. [2Fe-2S] cluster is required as a cofactor. It depends on Mg(2+) as a cofactor.

It carries out the reaction (2R)-2,3-dihydroxy-3-methylbutanoate = 3-methyl-2-oxobutanoate + H2O. The catalysed reaction is (2R,3R)-2,3-dihydroxy-3-methylpentanoate = (S)-3-methyl-2-oxopentanoate + H2O. It functions in the pathway amino-acid biosynthesis; L-isoleucine biosynthesis; L-isoleucine from 2-oxobutanoate: step 3/4. It participates in amino-acid biosynthesis; L-valine biosynthesis; L-valine from pyruvate: step 3/4. Its function is as follows. Functions in the biosynthesis of branched-chain amino acids. Catalyzes the dehydration of (2R,3R)-2,3-dihydroxy-3-methylpentanoate (2,3-dihydroxy-3-methylvalerate) into 2-oxo-3-methylpentanoate (2-oxo-3-methylvalerate) and of (2R)-2,3-dihydroxy-3-methylbutanoate (2,3-dihydroxyisovalerate) into 2-oxo-3-methylbutanoate (2-oxoisovalerate), the penultimate precursor to L-isoleucine and L-valine, respectively. This is Dihydroxy-acid dehydratase from Anaeromyxobacter dehalogenans (strain 2CP-1 / ATCC BAA-258).